A 345-amino-acid chain; its full sequence is Phosphate acyltransferase (345 aa).

This sequence belongs to the PlsX family. Homodimer. Probably interacts with PlsY.

It is found in the cytoplasm. It carries out the reaction a fatty acyl-[ACP] + phosphate = an acyl phosphate + holo-[ACP]. It participates in lipid metabolism; phospholipid metabolism. Catalyzes the reversible formation of acyl-phosphate (acyl-PO(4)) from acyl-[acyl-carrier-protein] (acyl-ACP). This enzyme utilizes acyl-ACP as fatty acyl donor, but not acyl-CoA. The sequence is that of Phosphate acyltransferase from Thermodesulfovibrio yellowstonii (strain ATCC 51303 / DSM 11347 / YP87).